The primary structure comprises 937 residues: Translation initiation factor IF-2 (937 aa).

The interval 47-352 (RAAFQTKATP…EMPQRKERPL (306 aa)) is disordered. Positions 52-68 (TKATPAASKPATPAAPK) are enriched in low complexity. The span at 97–116 (QHSNNRPQANANRNGQASNG) shows a compositional bias: polar residues. A compositionally biased stretch (low complexity) spans 117–153 (QNRTNNARPNNNSARPNNSRPNTNSRPNNNSQNRSTS). Polar residues predominate over residues 154–169 (ANHPMSLQEQISQANA). Positions 173–197 (RTQERIQQQREQREADEKKRREQAN) are enriched in basic and acidic residues. Polar residues predominate over residues 202–229 (TRNNASNNRPSNGKPTNGARPTTNSPRP). The segment covering 240–269 (SSRPNNNNSARPNTTNNRPTNSRPATTPSR) has biased composition (low complexity). Polar residues predominate over residues 274–298 (QEMQQKMQANTVSASKPASNNTASK). Residues 322–331 (FNKKRKKTRK) are compositionally biased toward basic residues. A compositionally biased stretch (basic and acidic residues) spans 339–352 (AAKKEMPQRKERPL). The 170-residue stretch at 438-607 (SRPPVVTIMG…LLEADVLELK (170 aa)) folds into the tr-type G domain. Residues 447 to 454 (GHVDHGKT) are G1. 447-454 (GHVDHGKT) is a GTP binding site. Residues 472–476 (GITQH) form a G2 region. The interval 493–496 (DTPG) is G3. GTP contacts are provided by residues 493 to 497 (DTPGH) and 547 to 550 (NKID). The tract at residues 547–550 (NKID) is G4. Residues 583–585 (SAK) form a G5 region.

The protein belongs to the TRAFAC class translation factor GTPase superfamily. Classic translation factor GTPase family. IF-2 subfamily.

The protein localises to the cytoplasm. Functionally, one of the essential components for the initiation of protein synthesis. Protects formylmethionyl-tRNA from spontaneous hydrolysis and promotes its binding to the 30S ribosomal subunits. Also involved in the hydrolysis of GTP during the formation of the 70S ribosomal complex. This Latilactobacillus sakei subsp. sakei (strain 23K) (Lactobacillus sakei subsp. sakei) protein is Translation initiation factor IF-2.